Consider the following 304-residue polypeptide: DnaJ homolog subfamily C member 17 (304 aa).

Positions 11–76 constitute a J domain; sequence DLYALLGIEE…AARAAYDKVR (66 aa). Over residues 79–106 the composition is skewed to basic and acidic residues; that stretch reads KKQAAERTQKLDEKRKKVKLDLEARERQ. A disordered region spans residues 79 to 145; the sequence is KKQAAERTQK…SRQLEEQQRL (67 aa). The residue at position 112 (Ser-112) is a Phosphoserine. The span at 118-145 shows a compositional bias: basic and acidic residues; the sequence is SRSTRTLEQEIERLREEGSRQLEEQQRL. In terms of domain architecture, RRM spans 178–249; it reads KCKKEDESKG…NPLKISWLEG (72 aa). Position 264 is an N6-methyllysine (Lys-264).

The protein localises to the cytoplasm. It is found in the nucleus. May negatively affect PAX8-induced thyroglobulin/TG transcription. This Homo sapiens (Human) protein is DnaJ homolog subfamily C member 17 (DNAJC17).